We begin with the raw amino-acid sequence, 348 residues long: Phosphate acyltransferase (348 aa).

It belongs to the PlsX family. Homodimer. Probably interacts with PlsY.

Its subcellular location is the cytoplasm. The enzyme catalyses a fatty acyl-[ACP] + phosphate = an acyl phosphate + holo-[ACP]. It functions in the pathway lipid metabolism; phospholipid metabolism. Catalyzes the reversible formation of acyl-phosphate (acyl-PO(4)) from acyl-[acyl-carrier-protein] (acyl-ACP). This enzyme utilizes acyl-ACP as fatty acyl donor, but not acyl-CoA. The polypeptide is Phosphate acyltransferase (Francisella philomiragia subsp. philomiragia (strain ATCC 25017 / CCUG 19701 / FSC 153 / O#319-036)).